The primary structure comprises 71 residues: UPF0352 protein Ssed_1809 (71 aa).

The protein belongs to the UPF0352 family.

The sequence is that of UPF0352 protein Ssed_1809 from Shewanella sediminis (strain HAW-EB3).